The sequence spans 356 residues: S-adenosylmethionine:tRNA ribosyltransferase-isomerase (356 aa).

The protein belongs to the QueA family. In terms of assembly, monomer.

The protein localises to the cytoplasm. The catalysed reaction is 7-aminomethyl-7-carbaguanosine(34) in tRNA + S-adenosyl-L-methionine = epoxyqueuosine(34) in tRNA + adenine + L-methionine + 2 H(+). The protein operates within tRNA modification; tRNA-queuosine biosynthesis. Its function is as follows. Transfers and isomerizes the ribose moiety from AdoMet to the 7-aminomethyl group of 7-deazaguanine (preQ1-tRNA) to give epoxyqueuosine (oQ-tRNA). The sequence is that of S-adenosylmethionine:tRNA ribosyltransferase-isomerase from Chromohalobacter salexigens (strain ATCC BAA-138 / DSM 3043 / CIP 106854 / NCIMB 13768 / 1H11).